Consider the following 102-residue polypeptide: uncharacterized protein (102 aa).

The next 2 helical transmembrane spans lie at 38–58 and 64–84; these read FYVW…QLIL and VLFL…LFQF.

It localises to the membrane. This is an uncharacterized protein from Saccharomyces cerevisiae (strain ATCC 204508 / S288c) (Baker's yeast).